Here is a 96-residue protein sequence, read N- to C-terminus: Putative septation protein SpoVG (96 aa).

The protein belongs to the SpoVG family.

In terms of biological role, could be involved in septation. The sequence is that of Putative septation protein SpoVG from Borrelia hermsii (strain HS1 / DAH).